Here is a 453-residue protein sequence, read N- to C-terminus: Ribulose bisphosphate carboxylase large chain (453 aa).

A propeptide spanning residues 1–2 (MS) is cleaved from the precursor. Residue Pro3 is modified to N-acetylproline. At Lys14 the chain carries N6,N6,N6-trimethyllysine. 2 residues coordinate substrate: Asn123 and Thr173. Catalysis depends on Lys175, which acts as the Proton acceptor. Residue Lys177 coordinates substrate. The Mg(2+) site is built by Lys201, Asp203, and Glu204. Lys201 carries the N6-carboxylysine modification. His294 functions as the Proton acceptor in the catalytic mechanism. Residues Arg295, His327, and Ser379 each coordinate substrate.

The protein belongs to the RuBisCO large chain family. Type I subfamily. Heterohexadecamer of 8 large chains and 8 small chains; disulfide-linked. The disulfide link is formed within the large subunit homodimers. The cofactor is Mg(2+). Post-translationally, the disulfide bond which can form in the large chain dimeric partners within the hexadecamer appears to be associated with oxidative stress and protein turnover.

It is found in the plastid. Its subcellular location is the chloroplast. It carries out the reaction 2 (2R)-3-phosphoglycerate + 2 H(+) = D-ribulose 1,5-bisphosphate + CO2 + H2O. It catalyses the reaction D-ribulose 1,5-bisphosphate + O2 = 2-phosphoglycolate + (2R)-3-phosphoglycerate + 2 H(+). RuBisCO catalyzes two reactions: the carboxylation of D-ribulose 1,5-bisphosphate, the primary event in carbon dioxide fixation, as well as the oxidative fragmentation of the pentose substrate in the photorespiration process. Both reactions occur simultaneously and in competition at the same active site. This Rubia tinctorum (Madder) protein is Ribulose bisphosphate carboxylase large chain.